An 839-amino-acid chain; its full sequence is NT-3 growth factor receptor (839 aa).

The N-terminal stretch at 1–31 is a signal peptide; the sequence is MDVSLCPAKCSFWRIFLLGSVWLDYVGSVLA. 2 disulfide bridges follow: C32-C38 and C36-C45. Topologically, residues 32 to 429 are extracellular; the sequence is CPANCVCSKT…TVTHKPEEDT (398 aa). N-linked (GlcNAc...) asparagine glycans are attached at residues N72 and N79. LRR repeat units lie at residues 104–125 and 128–149; these read GLQK…AFAK and HLRY…LFQT. Residues N133 and N163 are each glycosylated (N-linked (GlcNAc...) asparagine). The 50-residue stretch at 160 to 209 folds into the LRRCT domain; sequence NFFNCSCDIRWMQLWQEQGEAKLNSQNLYCINADGSQLPLFRMNISQCDL. 2 cysteine pairs are disulfide-bonded: C164–C189 and C166–C207. Residues N203, N218, N232, N259, N267, N272, and N294 are each glycosylated (N-linked (GlcNAc...) asparagine). Ig-like C2-type domains follow at residues 210 to 300 and 309 to 382; these read PEIS…VALT and SLEE…IAKN. A disulfide bridge connects residues C231 and C284. The cysteines at positions 320 and 362 are disulfide-linked. N-linked (GlcNAc...) asparagine glycans are attached at residues N375 and N388. A helical membrane pass occupies residues 430–453; sequence FGVSIAVGLAAFACVLLVVLFVMI. Residues 454 to 839 are Cytoplasmic-facing; the sequence is NKYGRRSKFG…ATPIYLDILG (386 aa). S493 bears the Phosphoserine mark. Y516 is subject to Phosphotyrosine; by autocatalysis. A Protein kinase domain is found at 538–839; it reads IVLKRELGEG…ATPIYLDILG (302 aa). ATP-binding positions include 544–552 and K572; that span reads LGEGAFGKV. The Proton acceptor role is filled by D679. Phosphotyrosine; by autocatalysis occurs at positions 705, 709, and 710.

It belongs to the protein kinase superfamily. Tyr protein kinase family. Insulin receptor subfamily. As to quaternary structure, exists in a dynamic equilibrium between monomeric (low affinity) and dimeric (high affinity) structures. Binds SH2B2. Interacts with SQSTM1 and KIDINS220. Interacts with PTPRS. Interacts with MAPK8IP3/JIP3. In terms of processing, ligand-mediated auto-phosphorylation. In terms of tissue distribution, widely expressed but mainly in nervous tissue. Isoform 2 is expressed at higher levels in adult brain than in fetal brain.

It localises to the membrane. It carries out the reaction L-tyrosyl-[protein] + ATP = O-phospho-L-tyrosyl-[protein] + ADP + H(+). Receptor tyrosine kinase involved in nervous system and probably heart development. Upon binding of its ligand NTF3/neurotrophin-3, NTRK3 autophosphorylates and activates different signaling pathways, including the phosphatidylinositol 3-kinase/AKT and the MAPK pathways, that control cell survival and differentiation. This is NT-3 growth factor receptor (NTRK3) from Homo sapiens (Human).